Consider the following 542-residue polypeptide: Membrane protein insertase YidC (542 aa).

The helical transmembrane segment at 5-25 (TLLAVILSITVFYVFSLLFAP) threads the bilayer. The disordered stretch occupies residues 33-64 (ESTGQAVSAPVSAGQPVAGGVQPSASAPSLPA). Residues 54-64 (QPSASAPSLPA) show a composition bias toward low complexity. Helical transmembrane passes span 323 to 343 (LDLG…KYFY), 345 to 365 (YVGN…ALFF), 419 to 439 (LPML…MFSI), 463 to 483 (MLGL…TMFI), and 500 to 520 (MLAL…GLVL).

This sequence belongs to the OXA1/ALB3/YidC family. Type 1 subfamily. Interacts with the Sec translocase complex via SecD. Specifically interacts with transmembrane segments of nascent integral membrane proteins during membrane integration.

The protein localises to the cell inner membrane. In terms of biological role, required for the insertion and/or proper folding and/or complex formation of integral membrane proteins into the membrane. Involved in integration of membrane proteins that insert both dependently and independently of the Sec translocase complex, as well as at least some lipoproteins. Aids folding of multispanning membrane proteins. This Pelobacter propionicus (strain DSM 2379 / NBRC 103807 / OttBd1) protein is Membrane protein insertase YidC.